A 309-amino-acid chain; its full sequence is UDP-N-acetylenolpyruvoylglucosamine reductase (309 aa).

Residues 33–195 form the FAD-binding PCMH-type domain; it reads VGGQAETLFR…VRARLRTRPG (163 aa). Arginine 175 is a catalytic residue. Serine 224 serves as the catalytic Proton donor. Residue glutamate 294 is part of the active site.

It belongs to the MurB family. FAD is required as a cofactor.

The protein resides in the cytoplasm. It catalyses the reaction UDP-N-acetyl-alpha-D-muramate + NADP(+) = UDP-N-acetyl-3-O-(1-carboxyvinyl)-alpha-D-glucosamine + NADPH + H(+). Its pathway is cell wall biogenesis; peptidoglycan biosynthesis. In terms of biological role, cell wall formation. This is UDP-N-acetylenolpyruvoylglucosamine reductase from Granulibacter bethesdensis (strain ATCC BAA-1260 / CGDNIH1).